Here is a 159-residue protein sequence, read N- to C-terminus: MQKRAIYPGTFDPITNGHLDIVTRATQMFDHVILAIAASPSKKPMFTLDERVALAQKATAHLGNVEVVGFSDLMANFARDRQANILIRGLRAVADFEYEMQLAHMNRHLMPQLESVFLMPSKEWSFISSSLVKEVARHQGDVTHFLPDNVHQALMDKLK.

Thr10 serves as a coordination point for substrate. ATP is bound by residues 10–11 and His18; that span reads TF. Residues Lys42, Met74, and Arg88 each contribute to the substrate site. ATP contacts are provided by residues 89–91, Glu99, and 124–130; these read GLR and WSFISSS.

Belongs to the bacterial CoaD family. As to quaternary structure, homohexamer. It depends on Mg(2+) as a cofactor.

The protein localises to the cytoplasm. It carries out the reaction (R)-4'-phosphopantetheine + ATP + H(+) = 3'-dephospho-CoA + diphosphate. It participates in cofactor biosynthesis; coenzyme A biosynthesis; CoA from (R)-pantothenate: step 4/5. Reversibly transfers an adenylyl group from ATP to 4'-phosphopantetheine, yielding dephospho-CoA (dPCoA) and pyrophosphate. The polypeptide is Phosphopantetheine adenylyltransferase (Salmonella typhimurium (strain LT2 / SGSC1412 / ATCC 700720)).